The following is a 544-amino-acid chain: 4-coumarate--CoA ligase 2 (544 aa).

Residues S190, S191, G192, T193, T194, and K198 each coordinate ATP. Y240 is a binding site for (E)-4-coumaroyl-AMP. K261 contacts CoA. The SBD1 stretch occupies residues 263–332 (DIVPFLELIQ…AKFPNAKLGQ (70 aa)). Residues A310, Q332, G333, T337, and M345 each coordinate (E)-4-coumaroyl-AMP. Residues Q332, G333, and T337 each coordinate ATP. Residues 333–400 (GYGMTEAGPV…IRGDQIMKGY (68 aa)) form an SBD2 region. D421 and R436 together coordinate ATP. Positions 438 and 442 each coordinate (E)-4-coumaroyl-AMP. Residues K444 and G445 each coordinate CoA. K527 is a binding site for ATP.

It belongs to the ATP-dependent AMP-binding enzyme family. It depends on Mg(2+) as a cofactor.

It carries out the reaction (E)-4-coumarate + ATP + CoA = (E)-4-coumaroyl-CoA + AMP + diphosphate. The catalysed reaction is (E)-4-coumarate + ATP + H(+) = (E)-4-coumaroyl-AMP + diphosphate. The enzyme catalyses (E)-4-coumaroyl-AMP + CoA = (E)-4-coumaroyl-CoA + AMP + H(+). Its pathway is phytoalexin biosynthesis; 3,4',5-trihydroxystilbene biosynthesis; 3,4',5-trihydroxystilbene from trans-4-coumarate: step 1/2. Its function is as follows. Carboxylate--CoA ligase that may use 4-coumarate as substrate. Follows a two-step reaction mechanism, wherein the carboxylate substrate first undergoes adenylation by ATP, followed by a thioesterification in the presence of CoA to yield the final CoA thioester. The polypeptide is 4-coumarate--CoA ligase 2 (4CL2) (Petroselinum crispum (Parsley)).